Consider the following 455-residue polypeptide: mRNA cleavage and polyadenylation factor CLP1 (455 aa).

ATP contacts are provided by Glu-28 and Lys-67. The disordered stretch occupies residues 112-131 (EAAARNNGGGRSAPHGPRVL). 137 to 142 (GCGRTS) serves as a coordination point for ATP.

It belongs to the Clp1 family. Clp1 subfamily. As to quaternary structure, component of a pre-mRNA cleavage factor complex. Interacts directly with PCF11.

The protein localises to the nucleus. In terms of biological role, required for endonucleolytic cleavage during polyadenylation-dependent pre-mRNA 3'-end formation. This chain is mRNA cleavage and polyadenylation factor CLP1, found in Pyricularia oryzae (strain 70-15 / ATCC MYA-4617 / FGSC 8958) (Rice blast fungus).